The chain runs to 83 residues: Putative membrane protein insertion efficiency factor (83 aa).

The segment at 64-83 is disordered; that stretch reads GGFDPVPLKKDKNSKTTHHH.

It belongs to the UPF0161 family.

It is found in the cell membrane. In terms of biological role, could be involved in insertion of integral membrane proteins into the membrane. The sequence is that of Putative membrane protein insertion efficiency factor from Staphylococcus epidermidis (strain ATCC 12228 / FDA PCI 1200).